A 128-amino-acid polypeptide reads, in one-letter code: Cytochrome c' (128 aa).

Heme c is bound by residues Gln-13, Gln-17, Glu-69, Thr-70, Cys-118, Cys-121, and His-122.

As to quaternary structure, homodimer. Binds 1 heme c group covalently per subunit.

Cytochrome c' is the most widely occurring bacterial c-type cytochrome. Cytochromes c' are high-spin proteins and the heme has no sixth ligand. Their exact function is not known. The polypeptide is Cytochrome c' (Magnetospirillum molischianum (Rhodospirillum molischianum)).